Consider the following 432-residue polypeptide: Phosphomethylpyrimidine synthase (432 aa).

Substrate contacts are provided by residues asparagine 66, methionine 95, tyrosine 124, histidine 163, 185-187 (SRG), 226-229 (DGMR), and glutamate 265. Histidine 269 serves as a coordination point for Zn(2+). Substrate is bound at residue tyrosine 292. Zn(2+) is bound at residue histidine 333. [4Fe-4S] cluster is bound by residues cysteine 409, cysteine 412, and cysteine 416.

This sequence belongs to the ThiC family. The cofactor is [4Fe-4S] cluster.

It catalyses the reaction 5-amino-1-(5-phospho-beta-D-ribosyl)imidazole + S-adenosyl-L-methionine = 4-amino-2-methyl-5-(phosphooxymethyl)pyrimidine + CO + 5'-deoxyadenosine + formate + L-methionine + 3 H(+). Its pathway is cofactor biosynthesis; thiamine diphosphate biosynthesis. Its function is as follows. Catalyzes the synthesis of the hydroxymethylpyrimidine phosphate (HMP-P) moiety of thiamine from aminoimidazole ribotide (AIR) in a radical S-adenosyl-L-methionine (SAM)-dependent reaction. The sequence is that of Phosphomethylpyrimidine synthase from Desulforudis audaxviator (strain MP104C).